We begin with the raw amino-acid sequence, 1342 residues long: DNA-directed RNA polymerase subunit beta (1342 aa).

It belongs to the RNA polymerase beta chain family. In terms of assembly, the RNAP catalytic core consists of 2 alpha, 1 beta, 1 beta' and 1 omega subunit. When a sigma factor is associated with the core the holoenzyme is formed, which can initiate transcription.

It catalyses the reaction RNA(n) + a ribonucleoside 5'-triphosphate = RNA(n+1) + diphosphate. DNA-dependent RNA polymerase catalyzes the transcription of DNA into RNA using the four ribonucleoside triphosphates as substrates. The protein is DNA-directed RNA polymerase subunit beta of Pectobacterium carotovorum subsp. carotovorum (strain PC1).